Reading from the N-terminus, the 327-residue chain is MAISILGAGAWGTAIAISLGSKKDVILWTHNETTFESINGKRESDKLPGCRISDNVSVKLAIEDIINASVTILAVPTQSLRKVCQQLHNCNLKKDVAIILACKGIEKSTLKLPSEIVNEILPNNPIAIFSGPSFAVEVARKLPYSMVLACQNNTLGSKLVSELQQENVKLEFSNDIIGVQICAALKNVFAIACGIVLGSKLGFNAHAALITKSMSEIKALYSAKIGDGSVDINTLLGPACLGDLIMTCTSLNSRNLSFGFKIGNSDNGFNVQQILSEGKSVIEGFSTAESIFNLAGKLKIKMPICEAVYRLLYESASIEDTLSVLIS.

Residues tryptophan 11, histidine 30, and lysine 103 each contribute to the NADPH site. Sn-glycerol 3-phosphate-binding residues include lysine 103, glycine 131, and serine 133. Alanine 135 is a binding site for NADPH. Sn-glycerol 3-phosphate is bound by residues lysine 186, aspartate 243, serine 253, arginine 254, and asparagine 255. The active-site Proton acceptor is the lysine 186. Arginine 254 is an NADPH binding site. Residues valine 281 and glutamate 283 each contribute to the NADPH site.

It belongs to the NAD-dependent glycerol-3-phosphate dehydrogenase family.

It is found in the cytoplasm. It catalyses the reaction sn-glycerol 3-phosphate + NAD(+) = dihydroxyacetone phosphate + NADH + H(+). The catalysed reaction is sn-glycerol 3-phosphate + NADP(+) = dihydroxyacetone phosphate + NADPH + H(+). The protein operates within membrane lipid metabolism; glycerophospholipid metabolism. In terms of biological role, catalyzes the reduction of the glycolytic intermediate dihydroxyacetone phosphate (DHAP) to sn-glycerol 3-phosphate (G3P), the key precursor for phospholipid synthesis. The chain is Glycerol-3-phosphate dehydrogenase [NAD(P)+] from Wolbachia pipientis wMel.